A 147-amino-acid polypeptide reads, in one-letter code: Large ribosomal subunit protein bL9 (147 aa).

This sequence belongs to the bacterial ribosomal protein bL9 family.

Its function is as follows. Binds to the 23S rRNA. In Thermoanaerobacter pseudethanolicus (strain ATCC 33223 / 39E) (Clostridium thermohydrosulfuricum), this protein is Large ribosomal subunit protein bL9.